A 37-amino-acid chain; its full sequence is Photosystem I reaction center subunit VIII (37 aa).

The chain crosses the membrane as a helical span at residues 10 to 30; sequence IFVPLVGLVFPAIAMASLSLY.

Belongs to the PsaI family.

The protein resides in the plastid. It localises to the chloroplast thylakoid membrane. Its function is as follows. May help in the organization of the PsaL subunit. This Gossypium hirsutum (Upland cotton) protein is Photosystem I reaction center subunit VIII.